We begin with the raw amino-acid sequence, 138 residues long: Cysteine desulfuration protein SufE (138 aa).

Catalysis depends on Cys51, which acts as the Cysteine persulfide intermediate.

It belongs to the SufE family. Homodimer. Interacts with SufS.

It localises to the cytoplasm. The protein operates within cofactor biosynthesis; iron-sulfur cluster biosynthesis. Functionally, participates in cysteine desulfuration mediated by SufS. Cysteine desulfuration mobilizes sulfur from L-cysteine to yield L-alanine and constitutes an essential step in sulfur metabolism for biosynthesis of a variety of sulfur-containing biomolecules. Functions as a sulfur acceptor for SufS, by mediating the direct transfer of the sulfur atom from the S-sulfanylcysteine of SufS, an intermediate product of cysteine desulfuration process. The chain is Cysteine desulfuration protein SufE from Shigella sonnei (strain Ss046).